The primary structure comprises 287 residues: 4-hydroxybenzoate octaprenyltransferase (287 aa).

Transmembrane regions (helical) follow at residues 41 to 61 (LPLL…GCAI), 92 to 112 (VALA…LNAL), 133 to 153 (FFAI…PMAF), 160 to 180 (VPML…AYDT), 218 to 238 (LGIY…WLGW), and 267 to 287 (NNWL…ATWF).

The protein belongs to the UbiA prenyltransferase family. The cofactor is Mg(2+).

It is found in the cell inner membrane. The enzyme catalyses all-trans-octaprenyl diphosphate + 4-hydroxybenzoate = 4-hydroxy-3-(all-trans-octaprenyl)benzoate + diphosphate. Its pathway is cofactor biosynthesis; ubiquinone biosynthesis. Its function is as follows. Catalyzes the prenylation of para-hydroxybenzoate (PHB) with an all-trans polyprenyl group. Mediates the second step in the final reaction sequence of ubiquinone-8 (UQ-8) biosynthesis, which is the condensation of the polyisoprenoid side chain with PHB, generating the first membrane-bound Q intermediate 3-octaprenyl-4-hydroxybenzoate. The sequence is that of 4-hydroxybenzoate octaprenyltransferase from Paraburkholderia xenovorans (strain LB400).